The primary structure comprises 616 residues: Sialic acid TRAP transporter permease protein SiaT (616 aa).

Positions 1 to 190 (MKYINKLEEW…RISNYIKLGS (190 aa)) are TRAP transporter small permease. The next 17 membrane-spanning stretches (helical) occupy residues 9–29 (EWLG…QILS), 36–56 (PLIW…MLGI), 83–103 (TNTF…HFGI), 117–137 (GGIS…LMMF), 153–173 (YLPA…LFFA), 195–215 (IALL…WSLF), 244–264 (FPLL…TGGI), 288–308 (IGAS…AGGL), 332–352 (ASCI…YGVI), 357–377 (IAKL…ALMA), 407–427 (FWAI…LFSP), 431–451 (AIVA…ELTL), 459–479 (IEAM…TFFG), 505–525 (VLVM…ALAL), 527–547 (FLVL…LIFF), 552–572 (TLNM…FVVA), and 587–607 (LPFL…PQII). The interval 191-616 (SSVYIALLVW…ITFVPNLLIP (426 aa)) is TRAP transporter large permease.

This sequence in the N-terminal section; belongs to the TRAP transporter small permease family. The protein in the C-terminal section; belongs to the TRAP transporter large permease family. In terms of assembly, the complex comprises the extracytoplasmic solute receptor protein SiaP, and the fused transmembrane protein SiaT.

The protein localises to the cell inner membrane. Its function is as follows. Part of the tripartite ATP-independent periplasmic (TRAP) transport system SiaPT involved in the uptake of sialic acid. The sequence is that of Sialic acid TRAP transporter permease protein SiaT (siaT) from Haemophilus influenzae (strain 86-028NP).